The chain runs to 432 residues: Trigger factor (432 aa).

The 86-residue stretch at 161–246 (EDRVTIDFTG…LKKVEERELP (86 aa)) folds into the PPIase FKBP-type domain.

It belongs to the FKBP-type PPIase family. Tig subfamily.

The protein resides in the cytoplasm. The catalysed reaction is [protein]-peptidylproline (omega=180) = [protein]-peptidylproline (omega=0). Its function is as follows. Involved in protein export. Acts as a chaperone by maintaining the newly synthesized protein in an open conformation. Functions as a peptidyl-prolyl cis-trans isomerase. This is Trigger factor from Salmonella typhi.